A 1171-amino-acid polypeptide reads, in one-letter code: Pyruvate:ferredoxin oxidoreductase (1171 aa).

Positions 29 and 112 each coordinate pyruvate. CoA is bound by residues 424–428 (SDGTV), Lys-456, Asn-556, and Asn-598. 4Fe-4S ferredoxin-type domains are found at residues 677–706 (NIPQ…PYLA) and 733–764 (FRIQ…MVPL). The [4Fe-4S] cluster site is built by Cys-686, Cys-689, Cys-692, Cys-696, Cys-742, Cys-745, Cys-748, Cys-752, Cys-809, and Cys-812. Thiamine diphosphate is bound by residues Glu-814, Cys-837, 967-969 (DGW), and 995-1000 (TEVYSN). Residue Cys-837 participates in [4Fe-4S] cluster binding. 3 residues coordinate Mg(2+): Asp-967, Thr-995, and Val-997. Asn-1000 provides a ligand contact to pyruvate. Cys-1075 contributes to the [4Fe-4S] cluster binding site.

Belongs to the pyruvate:ferredoxin/flavodoxin oxidoreductase family. Homodimer. Requires [4Fe-4S] cluster as cofactor. It depends on thiamine diphosphate as a cofactor. Mg(2+) is required as a cofactor.

It catalyses the reaction 2 oxidized [2Fe-2S]-[ferredoxin] + pyruvate + CoA = 2 reduced [2Fe-2S]-[ferredoxin] + acetyl-CoA + CO2 + H(+). In terms of biological role, catalyzes the oxidative decarboxylation of pyruvate to acetyl-CoA and carbon dioxide. The two electrons that are generated as a result of pyruvate decarboxylation are used in the reduction of low potential ferredoxins, which provide reducing equivalents for central metabolism. Also catalyzes the reverse reaction, i.e. the synthesis of pyruvate from acetyl-CoA and carbon dioxide. Appears to function physiologically in both directions. The oxidation of pyruvate by PFOR is required to connect glycolysis and the Wood-Ljungdahl pathway of reductive acetogenesis. The conversion of acetyl-CoA to pyruvate links the Wood-Ljungdahl pathway of autotrophic CO2 fixation to the reductive tricarboxylic acid cycle. Can use methyl viologen as electron carrier in vitro. This Moorella thermoacetica (strain ATCC 39073 / JCM 9320) protein is Pyruvate:ferredoxin oxidoreductase.